A 157-amino-acid chain; its full sequence is Cyclic pyranopterin monophosphate synthase (157 aa).

Residues 74-76 and 112-113 contribute to the substrate site; these read MCH and ME. Aspartate 127 is an active-site residue.

Belongs to the MoaC family. Homohexamer; trimer of dimers.

It carries out the reaction (8S)-3',8-cyclo-7,8-dihydroguanosine 5'-triphosphate = cyclic pyranopterin phosphate + diphosphate. Its pathway is cofactor biosynthesis; molybdopterin biosynthesis. Its function is as follows. Catalyzes the conversion of (8S)-3',8-cyclo-7,8-dihydroguanosine 5'-triphosphate to cyclic pyranopterin monophosphate (cPMP). This chain is Cyclic pyranopterin monophosphate synthase, found in Campylobacter jejuni subsp. jejuni serotype O:6 (strain 81116 / NCTC 11828).